The sequence spans 203 residues: Dephospho-CoA kinase (203 aa).

The 199-residue stretch at 3–201 folds into the DPCK domain; the sequence is SVGLTGGIGS…QRYLGYAAAA (199 aa). Residue 11–16 coordinates ATP; the sequence is GSGKTT.

This sequence belongs to the CoaE family.

It is found in the cytoplasm. The catalysed reaction is 3'-dephospho-CoA + ATP = ADP + CoA + H(+). It functions in the pathway cofactor biosynthesis; coenzyme A biosynthesis; CoA from (R)-pantothenate: step 5/5. Functionally, catalyzes the phosphorylation of the 3'-hydroxyl group of dephosphocoenzyme A to form coenzyme A. The polypeptide is Dephospho-CoA kinase (Burkholderia thailandensis (strain ATCC 700388 / DSM 13276 / CCUG 48851 / CIP 106301 / E264)).